A 287-amino-acid polypeptide reads, in one-letter code: MAITASMVKELREKTSAGMMDCKKALEECGGEMDKAVDWLRQKGLSKAAKKAGRATSEGLVGCFVSADGKTAGLAELKCETDFVSRNEKFVELAGKLAEQVATKGALDESAQTAINDIIATLGENMGSGRTAQMNVAGEGFIGSYLHSNGKIAVLVEMTCEKAATAAEATFLECAKNVAMQIAASNPAAVSADKVDPALIAREREVYRQKALEEGKPENIVEKIAEGAVKKFFKEACLLEQPYIRDDKTTVAELLKQTSKAVGDNLGVARFVRFQLGEDAAAEEAAE.

The tract at residues 81 to 84 (TDFV) is involved in Mg(2+) ion dislocation from EF-Tu.

The protein belongs to the EF-Ts family.

It is found in the cytoplasm. Its function is as follows. Associates with the EF-Tu.GDP complex and induces the exchange of GDP to GTP. It remains bound to the aminoacyl-tRNA.EF-Tu.GTP complex up to the GTP hydrolysis stage on the ribosome. This Nitratidesulfovibrio vulgaris (strain ATCC 29579 / DSM 644 / CCUG 34227 / NCIMB 8303 / VKM B-1760 / Hildenborough) (Desulfovibrio vulgaris) protein is Elongation factor Ts.